The primary structure comprises 246 residues: Orotidine 5'-phosphate decarboxylase (246 aa).

Residues D18, K39, 66-75, T130, R192, Q201, G221, and R222 each bind substrate; that span reads DLKFHDIPAT. K68 functions as the Proton donor in the catalytic mechanism.

It belongs to the OMP decarboxylase family. Type 1 subfamily. In terms of assembly, homodimer.

It catalyses the reaction orotidine 5'-phosphate + H(+) = UMP + CO2. The protein operates within pyrimidine metabolism; UMP biosynthesis via de novo pathway; UMP from orotate: step 2/2. In terms of biological role, catalyzes the decarboxylation of orotidine 5'-monophosphate (OMP) to uridine 5'-monophosphate (UMP). The polypeptide is Orotidine 5'-phosphate decarboxylase (Parasynechococcus marenigrum (strain WH8102)).